We begin with the raw amino-acid sequence, 982 residues long: MSSEAVAQATAATTSPEHGVPTSSATPTPPPSKGGGAGGGGGGEQQQVPFQMIPPGHFFANPFLNPYIPTAGAPAQEGEAQPQMVFSPAQYQEVMHHYFQQMMAASGAQFPIPFPMQFQPALQQPRPSSQASSSHRSEDDNGRQTAGSVVSSNVSPNHREVRPAEDSTETSGVVQNNDELLVPTSTSSDVTIGDVIEKSDSPENSQESAGGEEKSEEKRKLSGDRTDSLIRKQMSEMEKEITRRSQNKNIKTIDDDGLAELIGGSSTRTVADDFSPFVDKSGLSYTAPAPPSTEKSAPKESLNQLRSSFNLPDDSTTVGPVGPSTVPQQSQQFANNSMFMANAGNFVQNAFPIGVTMTPQATFGAAPGFQMMQPHQHNLFMQQPNPTFVNNGTNPFLQTQATLPNFVQNGTAPLVPTVSAQQFTPEQLAAAFAQQQIAQSAAPTPFDSPPPSMPSTSSGPSGALAPPPPPSHPIPRRVSGNGWPEENKENGTSTSTTNGAQSVPAAAGTDDPVWVLRDSYLKKMQREQRTSEEEEMSWQEAATAAQEAAENGGGDDQEEQETDRLLNGGTTGASTKGAERRGSVDKKKNSKETMVHEPAVLIEGVLFRARYLGSTQMLCESRGSKAARMAQAQEAVARVKAPEGDVQPSTEIDLFISTEKIMVLNTDLQRISDTDVRQDILMDHALRTISYIADIGDLVVLMARRMSTSHSDESCSDGDSSGGGVRKTPKVICHVFESDEASFIAQSIGQAFQVAYVEFLRANGIDDPSYLRQIDYQEVLNSQELLGDELEMFAKKETQKEVVVPKKAGEPLGIVVVESGWGSMLPTVVLAHMNPVGPAAHSNKLNIGDQIININGISLVGLPLSAAQTQIKNMKTATAVRMTVVSTPPVVEVRIRRPDTKYQLGFSVQNGVICSLLRGGIAERGGIRVGHRIIEINGTSVVAVAHDRIVNMLATAVGEIHMKTMPTSMFRLLTGQEQPQYI.

The segment covering 1–16 (MSSEAVAQATAATTSP) has biased composition (polar residues). Disordered stretches follow at residues 1–55 (MSSE…MIPP), 119–228 (QPAL…RTDS), 269–327 (TVAD…STVP), 432–511 (FAQQ…GTDD), and 525–593 (QREQ…SKET). Residues 33–44 (KGGGAGGGGGGE) are compositionally biased toward gly residues. Residues 119–134 (QPALQQPRPSSQASSS) are compositionally biased toward low complexity. Composition is skewed to polar residues over residues 143-156 (RQTA…NVSP) and 169-190 (ETSG…SSDV). The span at 211–228 (GEEKSEEKRKLSGDRTDS) shows a compositional bias: basic and acidic residues. Residues 301–318 (SLNQLRSSFNLPDDSTTV) show a composition bias toward polar residues. 2 stretches are compositionally biased toward low complexity: residues 432–445 (FAQQ…APTP) and 454–464 (PSTSSGPSGAL). Over residues 490–501 (NGTSTSTTNGAQ) the composition is skewed to polar residues. The segment covering 539–550 (QEAATAAQEAAE) has biased composition (low complexity). The segment covering 577 to 593 (GAERRGSVDKKKNSKET) has biased composition (basic and acidic residues). The PID domain occupies 604-788 (GVLFRARYLG…VLNSQELLGD (185 aa)). PDZ domains lie at 801-886 (EVVV…TVVS) and 892-968 (EVRI…MPTS).

Interacts (via N-terminus) with egl-9 isoform e (via catalytic domain); the interaction regulates its trafficking; the interaction is direct. Interacts with rab-6.2 (in GTP-bound form). In terms of processing, phosphorylated on multiple Ser and Thr residues by cdk-5 which regulates its localization. Post-translationally, may be hydroxylated by egl-9 isoform e on multiple Pro residues which may prevent phosphorylation by cdk-5. As to expression, expressed in vulval epithelial cells and neurons.

It is found in the golgi apparatus. It localises to the golgi stack membrane. The protein localises to the trans-Golgi network membrane. Its subcellular location is the cytoplasm. The protein resides in the synapse. It is found in the perikaryon. Functionally, required specifically for the determination of 3 vulval precursor cell fates P5.p, P6.p and P7.p during late second and early third larval stages; required for basolateral localization of receptor tyrosine kinase let-23. Could have a general but redundant role in development, functioning in diverse cell lineages to control cell fates. Regulates the trafficking of the glr-1 subunit of AMPA-type glutamate receptors (AMPRs) in the ventral nerve cord. This may be partly through interacting with the small GTPase rab-6.2 in its active GTP-bound state. This is Protein lin-10 from Caenorhabditis elegans.